The chain runs to 122 residues: Serum amyloid A-3 protein (122 aa).

The N-terminal stretch at 1–18 is a signal peptide; that stretch reads MKLSIGIIFCFLILGVNS. The tract at residues 88 to 122 is disordered; the sequence is GRGAEDSKADQEANQWGRSGNDPNHFRPKGLPDKY. A compositionally biased stretch (polar residues) spans 99-109; that stretch reads EANQWGRSGND.

This sequence belongs to the SAA family. Expressed by the liver; secreted in plasma. Expressed in synovial fibroblasts.

The protein resides in the secreted. Functionally, major acute phase reactant. Apolipoprotein of the HDL complex. In vitro exhibits antimicrobial activity against Escherichia coli, Streptococcus uberis and Pseudomonas aeruginosa. This is Serum amyloid A-3 protein (SAA3) from Oryctolagus cuniculus (Rabbit).